We begin with the raw amino-acid sequence, 558 residues long: Autophagy-related protein 18 (558 aa).

The WD 1 repeat unit spans residues 4 to 42; that stretch reads DYPPTINFINFNQTGSCISIATDDGFSIYNCDPFGKFYS. A disordered region spans residues 176-264; that stretch reads SSSSSQVEPP…FQQTGITGSS (89 aa). Polar residues predominate over residues 188–201; sequence PQQRSNFSGNTLET. A compositionally biased stretch (low complexity) spans 210–252; sequence GSNNSNNGNNNNNNNNNNNNNNNNNNNNNNNNNNSNNEENSNS. Residues 253-264 show a composition bias toward polar residues; it reads KSFQQTGITGSS. 2 WD repeats span residues 290–330 and 335–374; these read AHKG…KIYQ and TYPT…ETSS. The L/FRRG motif motif lies at 331 to 335; it reads FRRGT. The segment at 400–432 is disordered; the sequence is SSESLTESQSKDPHVDTSRSTVGRMIRKSSQQL.

It belongs to the WD repeat PROPPIN family. Component of the PI(3,5)P2 regulatory complex.

It localises to the preautophagosomal structure membrane. Its subcellular location is the vacuole membrane. It is found in the endosome membrane. The PI(3,5)P2 regulatory complex regulates both the synthesis and turnover of phosphatidylinositol 3,5-bisphosphate (PtdIns(3,5)P2). Necessary for proper vacuole morphology. Plays an important role in osmotically-induced vacuole fragmentation. Required for cytoplasm to vacuole transport (Cvt) vesicle formation, pexophagy and starvation-induced autophagy. Involved in correct ATG9 trafficking to the pre-autophagosomal structure. Might also be involved in premeiotic DNA replication. The protein is Autophagy-related protein 18 (ATG18) of Vanderwaltozyma polyspora (strain ATCC 22028 / DSM 70294 / BCRC 21397 / CBS 2163 / NBRC 10782 / NRRL Y-8283 / UCD 57-17) (Kluyveromyces polysporus).